Consider the following 490-residue polypeptide: Capsid protein (490 aa).

The disordered stretch occupies residues 79–143 (GETSEEESDS…TQPKTIPGQK (65 aa)). Positions 81 to 94 (TSEEESDSGEEPEF) are enriched in acidic residues. Residues 95 to 111 (EQVRMDRTGGTEIPKEE) are compositionally biased toward basic and acidic residues. A Nuclear localization signal motif is present at residues 122-125 (RKRK). A CCHC-type zinc finger spans residues 411–428 (CRCWICNIEGHYANECPN). A disordered region spans residues 464–490 (YKEEEEETSTEEDDGSSTSEDSDSESD). Acidic residues predominate over residues 465–490 (KEEEEETSTEEDDGSSTSEDSDSESD).

This sequence belongs to the caulimoviridae capsid protein family. As to quaternary structure, interacts (via nuclear localization signal) with host importin alpha.

The protein resides in the virion. The protein localises to the host nucleus. Functionally, self assembles to form an icosahedral capsid, about 50 nm in diameter, nm, composed of 420 subunits of the viral capsid protein. The capsid encapsulates the genomic dsDNA. Following virus entry into host cell, provides nuclear import of the viral genome. Virus particles do not enter the nucleus, but dock at the nuclear membrane through the interaction with host importins. The polypeptide is Capsid protein (Arabidopsis thaliana (Mouse-ear cress)).